The following is a 250-amino-acid chain: Ribosomal RNA-processing protein 15 (250 aa).

Positions 1 to 27 are enriched in basic and acidic residues; the sequence is MGSKHRVDTKDKKRTRKNAEFGREKRN. The interval 1–101 is disordered; that stretch reads MGSKHRVDTK…NSKHDDGSTG (101 aa). Composition is skewed to acidic residues over residues 43–53 and 67–83; these read MEGDEAEEDEQ and EQSD…EDDD. A Phosphoserine modification is found at Ser-69.

This sequence belongs to the RRP15 family.

It is found in the nucleus. The protein resides in the nucleolus. Its function is as follows. Constituent of pre-60S ribosomal particles. Required for large subunit rRNA maturation, in particular processing of the 27S pre-rRNA at the A3 and B1 sites to yield 5.8S and 25S rRNA. In Saccharomyces cerevisiae (strain ATCC 204508 / S288c) (Baker's yeast), this protein is Ribosomal RNA-processing protein 15.